We begin with the raw amino-acid sequence, 142 residues long: Large ribosomal subunit protein uL13 (142 aa).

This sequence belongs to the universal ribosomal protein uL13 family. In terms of assembly, part of the 50S ribosomal subunit.

This protein is one of the early assembly proteins of the 50S ribosomal subunit, although it is not seen to bind rRNA by itself. It is important during the early stages of 50S assembly. In Pectobacterium atrosepticum (strain SCRI 1043 / ATCC BAA-672) (Erwinia carotovora subsp. atroseptica), this protein is Large ribosomal subunit protein uL13.